A 363-amino-acid chain; its full sequence is Phosphoserine aminotransferase (363 aa).

Arginine 46 contacts L-glutamate. Pyridoxal 5'-phosphate-binding positions include 80 to 81 (AT), tryptophan 106, threonine 156, aspartate 176, and glutamine 199. Residue lysine 200 is modified to N6-(pyridoxal phosphate)lysine. Position 241-242 (241-242 (NT)) interacts with pyridoxal 5'-phosphate.

This sequence belongs to the class-V pyridoxal-phosphate-dependent aminotransferase family. SerC subfamily. As to quaternary structure, homodimer. The cofactor is pyridoxal 5'-phosphate.

The protein localises to the cytoplasm. The enzyme catalyses O-phospho-L-serine + 2-oxoglutarate = 3-phosphooxypyruvate + L-glutamate. It carries out the reaction 4-(phosphooxy)-L-threonine + 2-oxoglutarate = (R)-3-hydroxy-2-oxo-4-phosphooxybutanoate + L-glutamate. The protein operates within amino-acid biosynthesis; L-serine biosynthesis; L-serine from 3-phospho-D-glycerate: step 2/3. It participates in cofactor biosynthesis; pyridoxine 5'-phosphate biosynthesis; pyridoxine 5'-phosphate from D-erythrose 4-phosphate: step 3/5. In terms of biological role, catalyzes the reversible conversion of 3-phosphohydroxypyruvate to phosphoserine and of 3-hydroxy-2-oxo-4-phosphonooxybutanoate to phosphohydroxythreonine. The protein is Phosphoserine aminotransferase of Leptospira interrogans serogroup Icterohaemorrhagiae serovar copenhageni (strain Fiocruz L1-130).